Consider the following 904-residue polypeptide: MTDVLTTASLISEESRATATPMMEQYIEIKANNPGSLLFYRMGDFYELFFDDAVEASRALGITLTKRGQHMGHDIPMCGVPVHAADDYLQKLILRGYRVAVCEQIEDPAEAKKRGSKSVVKRDVVRLVTPGTLTEEKLLSPTESNYLMALARIRGSAEAQFALAWIDISTGVFRLAETTLTRLLADIWRIDPRELIVADSLFHDEELRPVFDVLGRVAVPQPAILFDSAVAEGRIARYFNVSTLDGFGTFSRVEMAAAAAAVAYVEKTQIAERPPLGAPERESAASTLFIDPATRANLELVKTLSGDRDGSLLHALNRTVTGGGARLLAERLMSPLTDPERINARLDAVAYLIDDVSLCDGLRDALKHVADMPRALSRLALERGGPRDLGAIRQGLVSAEKIAVILDGGLLPDELAKALRDLKALPGALEAMLGSMLADDLPLLKRDGGFLREGANPELDEVRALRDQSRRVIAGLQLQYADETGIKSLKIKHNNVLGYFIEVTAGNADVMMATDEAKARFIHRQTMAGAMRFTTTELADLESRIANAAAEALTMELEAFERMVEAVVQQAEAIKAGALALAVIDVASSLAYLATEQAYCRPIVDASMTFSIKGGRHPVVEQALRRQSAGPFIANNCDLSAVNGGKNGAIWLLTGPNMGGKSTFLRQNALIAILAQIGSFVPAEAAHIGVVDRLFSRVGASDDLARGRSTFMVEMVETAAILNQATDRSLVILDEIGRGTATFDGLSIAWAAVEHLHEVNRCRGLFATHFHELTVLSEKLGRLSNATMRVKEWEGDVIFLHEVGPGAADRSYGIQVARLAGLPASVVERAREVLTKLEDADRKNPASQLIDDLPLFQIAVRREETRKAGPSKVEEALKSFNPDEMTPREALDALYALKKELGKA.

655–662 serves as a coordination point for ATP; it reads GPNMGGKS.

The protein belongs to the DNA mismatch repair MutS family.

Functionally, this protein is involved in the repair of mismatches in DNA. It is possible that it carries out the mismatch recognition step. This protein has a weak ATPase activity. This is DNA mismatch repair protein MutS from Agrobacterium fabrum (strain C58 / ATCC 33970) (Agrobacterium tumefaciens (strain C58)).